Here is a 299-residue protein sequence, read N- to C-terminus: Acetylglutamate kinase (299 aa).

Residues 70-71 (GG), R92, and N186 each bind substrate.

The protein belongs to the acetylglutamate kinase family. ArgB subfamily.

The protein localises to the cytoplasm. The enzyme catalyses N-acetyl-L-glutamate + ATP = N-acetyl-L-glutamyl 5-phosphate + ADP. The protein operates within amino-acid biosynthesis; L-arginine biosynthesis; N(2)-acetyl-L-ornithine from L-glutamate: step 2/4. Catalyzes the ATP-dependent phosphorylation of N-acetyl-L-glutamate. In Thermoanaerobacter pseudethanolicus (strain ATCC 33223 / 39E) (Clostridium thermohydrosulfuricum), this protein is Acetylglutamate kinase.